The sequence spans 1213 residues: DNA-directed RNA polymerase subunit beta' (1213 aa).

4 residues coordinate Zn(2+): C60, C62, C75, and C78. Residues D449, D451, and D453 each coordinate Mg(2+). Zn(2+)-binding residues include C818, C892, C899, and C902.

The protein belongs to the RNA polymerase beta' chain family. The RNAP catalytic core consists of 2 alpha, 1 beta, 1 beta' and 1 omega subunit. When a sigma factor is associated with the core the holoenzyme is formed, which can initiate transcription. Mg(2+) serves as cofactor. Zn(2+) is required as a cofactor.

It catalyses the reaction RNA(n) + a ribonucleoside 5'-triphosphate = RNA(n+1) + diphosphate. DNA-dependent RNA polymerase catalyzes the transcription of DNA into RNA using the four ribonucleoside triphosphates as substrates. In Lactiplantibacillus plantarum (strain ATCC BAA-793 / NCIMB 8826 / WCFS1) (Lactobacillus plantarum), this protein is DNA-directed RNA polymerase subunit beta'.